Consider the following 1548-residue polypeptide: Dicer-like protein 1 (1548 aa).

Positions 1-41 are enriched in basic and acidic residues; it reads MGDPAAHEMADLERGFSSEDDAEYRSGDDEASKFVENEPSK. The interval 1–48 is disordered; that stretch reads MGDPAAHEMADLERGFSSEDDAEYRSGDDEASKFVENEPSKRGKISQK. A Helicase ATP-binding domain is found at 106–289; it reads LFERAKQQNT…QAAIELEGLL (184 aa). 119–126 serves as a coordination point for ATP; the sequence is LDTGSGKT. Positions 232–235 match the DEAH box motif; that stretch reads DEAH. The 162-residue stretch at 428 to 589 folds into the Helicase C-terminal domain; sequence TLSKLLEEYF…FCNTQPEDRL (162 aa). Positions 624-718 constitute a Dicer dsRNA-binding fold domain; sequence SLPILQAFLN…RSKFVEKRHV (95 aa). The PAZ domain maps to 871-1006; sequence PLLRHVADRD…FVLEPMRISP (136 aa). RNase III domains are found at residues 1051 to 1197 and 1248 to 1411; these read LTKD…MTTR and AQKI…VDSK. The Mg(2+) site is built by glutamate 1288, aspartate 1397, and glutamate 1400. One can recognise a DRBM domain in the interval 1445–1518; that stretch reads TFFTQYVFET…ARKALDKLRS (74 aa). Residues cysteine 1457, histidine 1489, cysteine 1530, and cysteine 1532 each coordinate Zn(2+).

It belongs to the helicase family. Dicer subfamily. Requires Mg(2+) as cofactor. It depends on Mn(2+) as a cofactor.

In terms of biological role, dicer-like endonuclease involved in cleaving double-stranded RNA in the RNA interference (RNAi) pathway. Produces 21 to 25 bp dsRNAs (siRNAs) which target the selective destruction of homologous RNAs leading to sequence-specific suppression of gene expression, called post-transcriptional gene silencing (PTGS). Part of a broad host defense response against viral infection and transposons. The sequence is that of Dicer-like protein 1 (DCL-1) from Cryphonectria parasitica (Chestnut blight fungus).